We begin with the raw amino-acid sequence, 226 residues long: Putative DNA repair protein recA homolog 4 (226 aa).

41 to 48 serves as a coordination point for ATP; that stretch reads GPEASGKT.

This sequence belongs to the RecA family.

The protein resides in the cytoplasm. Its function is as follows. Involved in recombination ability and DNA strand transfer activity. The chain is Putative DNA repair protein recA homolog 4 from Arabidopsis thaliana (Mouse-ear cress).